The chain runs to 203 residues: MIGRLRGIILEKQPPIVLLETGGVGYEVHMPMTCFYELPEAGQEAIVFTHFVVREDAQLLYGFNNKQERTLFKELIKTNGVGPKLALAILSGMSAQQFVNAVEREELGALVKLPGIGKKTAERLIVEMKDRFKGLHGDLFTPAVDLVLTSPASPTSEDAEQEAVAALVALGYKPQEASRMVNKIARPDASSETLIRDALRAAL.

Residues 1 to 64 are domain I; sequence MIGRLRGIIL…EDAQLLYGFN (64 aa). Residues 65–142 form a domain II region; that stretch reads NKQERTLFKE…KGLHGDLFTP (78 aa). A flexible linker region spans residues 143–154; it reads AVDLVLTSPASP. Residues 155 to 203 form a domain III region; the sequence is TSEDAEQEAVAALVALGYKPQEASRMVNKIARPDASSETLIRDALRAAL.

It belongs to the RuvA family. In terms of assembly, homotetramer. Forms an RuvA(8)-RuvB(12)-Holliday junction (HJ) complex. HJ DNA is sandwiched between 2 RuvA tetramers; dsDNA enters through RuvA and exits via RuvB. An RuvB hexamer assembles on each DNA strand where it exits the tetramer. Each RuvB hexamer is contacted by two RuvA subunits (via domain III) on 2 adjacent RuvB subunits; this complex drives branch migration. In the full resolvosome a probable DNA-RuvA(4)-RuvB(12)-RuvC(2) complex forms which resolves the HJ.

The protein localises to the cytoplasm. In terms of biological role, the RuvA-RuvB-RuvC complex processes Holliday junction (HJ) DNA during genetic recombination and DNA repair, while the RuvA-RuvB complex plays an important role in the rescue of blocked DNA replication forks via replication fork reversal (RFR). RuvA specifically binds to HJ cruciform DNA, conferring on it an open structure. The RuvB hexamer acts as an ATP-dependent pump, pulling dsDNA into and through the RuvAB complex. HJ branch migration allows RuvC to scan DNA until it finds its consensus sequence, where it cleaves and resolves the cruciform DNA. This Salmonella choleraesuis (strain SC-B67) protein is Holliday junction branch migration complex subunit RuvA.